The chain runs to 177 residues: Large ribosomal subunit protein uL6 (177 aa).

Belongs to the universal ribosomal protein uL6 family. As to quaternary structure, part of the 50S ribosomal subunit.

This protein binds to the 23S rRNA, and is important in its secondary structure. It is located near the subunit interface in the base of the L7/L12 stalk, and near the tRNA binding site of the peptidyltransferase center. The sequence is that of Large ribosomal subunit protein uL6 from Dinoroseobacter shibae (strain DSM 16493 / NCIMB 14021 / DFL 12).